The chain runs to 140 residues: ATP synthase epsilon chain 1 (140 aa).

It belongs to the ATPase epsilon chain family. F-type ATPases have 2 components, CF(1) - the catalytic core - and CF(0) - the membrane proton channel. CF(1) has five subunits: alpha(3), beta(3), gamma(1), delta(1), epsilon(1). CF(0) has three main subunits: a, b and c.

Its subcellular location is the cell inner membrane. Functionally, produces ATP from ADP in the presence of a proton gradient across the membrane. In Photobacterium profundum (strain SS9), this protein is ATP synthase epsilon chain 1.